The chain runs to 242 residues: Small ribosomal subunit protein uS2 (242 aa).

It belongs to the universal ribosomal protein uS2 family.

In Shewanella piezotolerans (strain WP3 / JCM 13877), this protein is Small ribosomal subunit protein uS2.